A 245-amino-acid chain; its full sequence is Myozenin-3 (245 aa).

At serine 31 the chain carries Phosphoserine. The tract at residues 50 to 67 (LLFQKRQRRVQKFTFELS) is binding to ACTN2, PPP3CA and TCAP. Residues 67–108 (SESLQAILASSARGKVAGRAAQATVPNGLEEQNHHSETHVFQ) are binding to FLNC. The tract at residues 93–134 (NGLEEQNHHSETHVFQGSPGDPGITHLGAAGTGSVRSPSALA) is disordered. Residues 180-201 (PIPRDYRNFNKTPVPFGGPHVR) form a binding to ACTN2 region.

The protein belongs to the myozenin family. Interacts with ACTN2, LDB3, FLNC, PPP3CA and TCAP. Expressed specifically in skeletal muscle and is enriched in fast-twitch muscle fibers. Not detected in heart.

It localises to the cytoplasm. The protein localises to the myofibril. It is found in the sarcomere. The protein resides in the z line. Its function is as follows. Myozenins may serve as intracellular binding proteins involved in linking Z line proteins such as alpha-actinin, gamma-filamin, TCAP/telethonin, LDB3/ZASP and localizing calcineurin signaling to the sarcomere. Plays an important role in the modulation of calcineurin signaling. May play a role in myofibrillogenesis. This is Myozenin-3 from Mus musculus (Mouse).